Here is a 1173-residue protein sequence, read N- to C-terminus: Calcium-transporting ATPase 2 (1173 aa).

The segment at 1–24 (MSRQDENSALLANNENNKPSYTGN) is disordered. Residues 1–114 (MSRQDENSAL…LQLVWAAFND (114 aa)) lie on the Cytoplasmic side of the membrane. Residues 7–17 (NSALLANNENN) are compositionally biased toward low complexity. Residues 115 to 139 (KTMQLLTVAAVVSFVLGLYELWMQP) form a helical membrane-spanning segment. Residues 140–152 (PQYDPEGNKIKQV) lie on the Vacuolar side of the membrane. Residues 153–173 (DWIEGVAIMIAVFVVVLVSAA) form a helical membrane-spanning segment. Residues 174–349 (NDYQKELQFA…LADNISVYGC (176 aa)) are Cytoplasmic-facing. Residues 350–368 (VSAIILFLVLFTRYLFYII) traverse the membrane as a helical segment. At 369-388 (PEDGRFHDLDPAQKGSKFMN) the chain is on the vacuolar side. A helical transmembrane segment spans residues 389 to 409 (IFITSITVIVVAVPEGLPLAV). V398 and E403 together coordinate Ca(2+). Residues 410–899 (TLALAFATTR…RCVSVSIKKF (490 aa)) are Cytoplasmic-facing. Residue D445 is the 4-aspartylphosphate intermediate of the active site. Residues D445 and T447 each contribute to the Mg(2+) site. ATP contacts are provided by residues T447, K643, 762-764 (TGD), R816, and K822. Position 841 (D841) interacts with Mg(2+). N844 serves as a coordination point for ATP. The helical transmembrane segment at 900–922 (IQFQLIVNITAVILTFVSSVASS) threads the bilayer. Position 907 (N907) interacts with Ca(2+). The Vacuolar segment spans residues 923 to 929 (DETSVLT). The helical transmembrane segment at 930–950 (AVQLLWINLIMDTLAALALAT) threads the bilayer. Positions 937 and 941 each coordinate Ca(2+). The Cytoplasmic segment spans residues 951–976 (DKPDPNIMDRKPRGRSTSLISVSTWK). The chain crosses the membrane as a helical span at residues 977-998 (MILSQATLQLIVTFILHFYGPE). Residues 999-1010 (LFFKKHEDEITS) lie on the Vacuolar side of the membrane. A helical membrane pass occupies residues 1011 to 1029 (HQQQQLNAMTFNTFVWLQF). Residues 1030-1065 (FTMLVSRKLDEGDGISNWRGRISAANLNFFQDLGRN) lie on the Cytoplasmic side of the membrane. The helical transmembrane segment at 1066-1086 (YYFLTIMAIIGSCQVLIMFFG) threads the bilayer. The Vacuolar segment spans residues 1087–1099 (GAPFSIARQTKSM). The helical transmembrane segment at 1100-1120 (WITAVLCGMLSLIMGVLVRIC) threads the bilayer. Residues 1121 to 1173 (PDEVAVKVFPAAFVQRFKYVFGLEFLRKNHTGKHDDEEALLEESDSPESTAFY) are Cytoplasmic-facing.

The protein belongs to the cation transport ATPase (P-type) (TC 3.A.3) family.

It localises to the vacuole membrane. The enzyme catalyses Ca(2+)(in) + ATP + H2O = Ca(2+)(out) + ADP + phosphate + H(+). In terms of biological role, this magnesium-dependent enzyme catalyzes the hydrolysis of ATP coupled with the transport of calcium. Transports the calcium to the vacuole and participates in the control of the cytosolic free calcium. The polypeptide is Calcium-transporting ATPase 2 (PMC1) (Saccharomyces cerevisiae (strain ATCC 204508 / S288c) (Baker's yeast)).